The chain runs to 497 residues: Xylooligosaccharide oxidase (497 aa).

Residues 1–16 (MHLLPLTVSATAVVSA) form the signal peptide. The cysteines at positions 30 and 79 are disulfide-linked. N-linked (GlcNAc...) asparagine glycans are attached at residues N42 and N117. An FAD-binding PCMH-type domain is found at 57–230 (LPYTPAAIAK…ASFRFKTFAA (174 aa)). The segment at residues 94–155 (HSYASFGLGG…GKRAFSHGTC (62 aa)) is a cross-link (6-(S-cysteinyl)-8alpha-(pros-histidyl)-FAD (His-Cys)). Substrate is bound at residue T154. N-linked (GlcNAc...) asparagine glycosylation is found at N192, N233, and N245. Position 272 (R272) interacts with substrate. N-linked (GlcNAc...) asparagine glycans are attached at residues N289 and N307. The substrate site is built by E412 and Y451.

The protein belongs to the oxygen-dependent FAD-linked oxidoreductase family. It depends on FAD as a cofactor. In terms of processing, the FAD cofactor is bound via a bicovalent 6-S-cysteinyl, 8alpha-N1-histidyl FAD linkage.

It localises to the secreted. The catalysed reaction is D-xylobiose + O2 = D-xylobiono-1,5-lactone + H2O2. The enzyme catalyses D-xylotriose + O2 = D-xylotriono-1,5-lactone + H2O2. It catalyses the reaction D-xylotetraose + O2 = D-xylotetraono-1,5-lactone + H2O2. Its function is as follows. Catalyzes the selective oxidation of C1 hydroxyl moieties on mono-, oligo- and polysaccharides with concomitant reduction of molecular oxygen to hydrogen peroxide. This results in the formation of the corresponding lactones, which typically undergo spontaneous hydrolysis. Xylooligosaccharide oxidase is able to oxidize a variety of substrates including D-xylose, D-cellobiose, lactose and arabinose. The enzyme acts primarily on xylooligosaccharides, indicating that it prefers pentose-based oligosaccharides over hexose-based oligosaccharides. The protein is Xylooligosaccharide oxidase of Thermothelomyces thermophilus (strain ATCC 42464 / BCRC 31852 / DSM 1799) (Sporotrichum thermophile).